The following is a 596-amino-acid chain: Probable translation initiation factor IF-2 (596 aa).

A tr-type G domain is found at 3-220 (IRSPIVSVLG…MLLGLAQEYL (218 aa)). The G1 stretch occupies residues 12-19 (GHVDHGKT). 12 to 19 (GHVDHGKT) contributes to the GTP binding site. The interval 37 to 41 (GITQH) is G2. The G3 stretch occupies residues 76 to 79 (DTPG). Residues 76 to 80 (DTPGH) and 130 to 133 (NKID) contribute to the GTP site. Residues 130–133 (NKID) form a G4 region. The G5 stretch occupies residues 198–200 (SAK).

It belongs to the TRAFAC class translation factor GTPase superfamily. Classic translation factor GTPase family. IF-2 subfamily.

Function in general translation initiation by promoting the binding of the formylmethionine-tRNA to ribosomes. Seems to function along with eIF-2. This Methanobrevibacter smithii (strain ATCC 35061 / DSM 861 / OCM 144 / PS) protein is Probable translation initiation factor IF-2.